The following is a 369-amino-acid chain: Protein RecA (369 aa).

66–73 (GPESSGKT) contacts ATP. The segment at 328 to 369 (GIDAESLEEKEDPEKVKEQRAKKAAPGEEKPAEPASPEKTDK) is disordered. Residues 339–369 (DPEKVKEQRAKKAAPGEEKPAEPASPEKTDK) show a composition bias toward basic and acidic residues.

This sequence belongs to the RecA family.

It is found in the cytoplasm. Can catalyze the hydrolysis of ATP in the presence of single-stranded DNA, the ATP-dependent uptake of single-stranded DNA by duplex DNA, and the ATP-dependent hybridization of homologous single-stranded DNAs. It interacts with LexA causing its activation and leading to its autocatalytic cleavage. The polypeptide is Protein RecA (Lactobacillus delbrueckii subsp. bulgaricus (strain ATCC BAA-365 / Lb-18)).